The chain runs to 321 residues: Glucokinase (321 aa).

ATP is bound at residue 8 to 13; the sequence is GDVGGT.

Belongs to the bacterial glucokinase family.

It is found in the cytoplasm. It catalyses the reaction D-glucose + ATP = D-glucose 6-phosphate + ADP + H(+). The protein is Glucokinase of Cronobacter sakazakii (strain ATCC BAA-894) (Enterobacter sakazakii).